A 143-amino-acid chain; its full sequence is Large ribosomal subunit protein uL11 (143 aa).

This sequence belongs to the universal ribosomal protein uL11 family. Part of the ribosomal stalk of the 50S ribosomal subunit. Interacts with L10 and the large rRNA to form the base of the stalk. L10 forms an elongated spine to which L12 dimers bind in a sequential fashion forming a multimeric L10(L12)X complex. One or more lysine residues are methylated.

Functionally, forms part of the ribosomal stalk which helps the ribosome interact with GTP-bound translation factors. This chain is Large ribosomal subunit protein uL11, found in Pseudomonas syringae pv. tomato (strain ATCC BAA-871 / DC3000).